The sequence spans 501 residues: Isoflavone 3'-hydroxylase (501 aa).

The chain crosses the membrane as a helical span at residues 7-24 (LLSLSFIITIKILLKITS). Cysteine 439 contacts heme.

The protein belongs to the cytochrome P450 family. The cofactor is heme. Expressed constitutively in leaves and stems, but not in roots.

The protein resides in the endoplasmic reticulum membrane. The enzyme catalyses formononetin + reduced [NADPH--hemoprotein reductase] + O2 = calycosin + oxidized [NADPH--hemoprotein reductase] + H2O + H(+). In terms of biological role, involved in the biosynthesis of the pterocarpin phytoalexins. Acts on isoflavones with a 4'-methoxy group on the B-ring, such as biochanin A, formononetin and 2'-hydroxyformononetin. Has a low activity with daidzein and pseudobaptigenin, and no activity with the 7-O-methylated isoflavonoids isoformononetin and prunetin. The chain is Isoflavone 3'-hydroxylase from Medicago truncatula (Barrel medic).